Consider the following 715-residue polypeptide: MTTTSAFMLNVRLDNVAVVAIDVPGEKVNTLKAEFAAQVRAILKQIRENKALQGVVFISAKADNFIAGADINMIGHCQNAQEAETLARQGQQLMAEIQALPVPVIAAIHGACLGGGLEMALACHRRICTDDVKTVLGLPEVQLGLLPGSGGTQRLPRLVGVSTALDMILTGKQLRARQALKAGLVDDVVPQTILLEAAVELAKKERLAQRTLPVRERILAGPLGRALLFRLVRKKTAQKTQGNYPATERIIDVIETGLAQGSSSGYDAEARAFGELAMTPQSQALRAIFFASTEVKKDPGSDAPPGPLNSVGILGGGLMGGGIAWVTACKGGLPVRIKDINTQGINHALKYSWDLLETKVRRRHIKASERDKQLALISGSTDYRGFSHRDLVIEAVFEDLPLKQQMVAEVEQNCAAHTIFASNTSSLPIGDIAANAARPEQVIGLHFFSPVEKMPLVEVIPHASTSAQTIATTVKLAKKQGKTPIVVSDKAGFYVNRILAPYINEAIRMLTEGERVEHIDAALVKFGFPVGPIQLLDEVGIDTGTKIIPVLEAAYGERFSAPANVVASILNDDRKGRKNGRGFYLYGEKGRKSKKQVDPAIYKLIGVQGQSRLSAQQVAERCVMLMLNEAARCFDEKVIRSARDGDIGAVFGIGFPPFLGGPFRYMDALGPGEMVATLQRLAALYGPRYAPCEQLVRMAERREHFWTNGETDQGN.

Residues 1–190 (MTTTSAFMLN…KAGLVDDVVP (190 aa)) form an enoyl-CoA hydratase region. Positions 306 to 715 (GPLNSVGILG…WTNGETDQGN (410 aa)) are 3-hydroxyacyl-CoA dehydrogenase.

It in the N-terminal section; belongs to the enoyl-CoA hydratase/isomerase family. In the central section; belongs to the 3-hydroxyacyl-CoA dehydrogenase family. As to quaternary structure, heterotetramer of two alpha chains (FadJ) and two beta chains (FadI).

Its subcellular location is the cytoplasm. It carries out the reaction a (3S)-3-hydroxyacyl-CoA = a (2E)-enoyl-CoA + H2O. The catalysed reaction is a 4-saturated-(3S)-3-hydroxyacyl-CoA = a (3E)-enoyl-CoA + H2O. The enzyme catalyses a (3S)-3-hydroxyacyl-CoA + NAD(+) = a 3-oxoacyl-CoA + NADH + H(+). It catalyses the reaction (3S)-3-hydroxybutanoyl-CoA = (3R)-3-hydroxybutanoyl-CoA. Its pathway is lipid metabolism; fatty acid beta-oxidation. Its function is as follows. Catalyzes the formation of a hydroxyacyl-CoA by addition of water on enoyl-CoA. Also exhibits 3-hydroxyacyl-CoA epimerase and 3-hydroxyacyl-CoA dehydrogenase activities. The sequence is that of Fatty acid oxidation complex subunit alpha from Salmonella paratyphi B (strain ATCC BAA-1250 / SPB7).